Reading from the N-terminus, the 392-residue chain is Mitochondrial distribution and morphology protein 10 (392 aa).

The protein belongs to the MDM10 family. Component of the ER-mitochondria encounter structure (ERMES) or MDM complex, composed of MMM1, MDM10, MDM12 and MDM34. Associates with the mitochondrial outer membrane sorting assembly machinery SAM(core) complex.

It is found in the mitochondrion outer membrane. Its function is as follows. Component of the ERMES/MDM complex, which serves as a molecular tether to connect the endoplasmic reticulum and mitochondria. Components of this complex are involved in the control of mitochondrial shape and protein biogenesis and may function in phospholipid exchange. MDM10 is involved in the late assembly steps of the general translocase of the mitochondrial outer membrane (TOM complex). Functions in the TOM40-specific route of the assembly of outer membrane beta-barrel proteins, including the association of TOM40 with the receptor TOM22 and small TOM proteins. Can associate with the SAM(core) complex as well as the MDM12-MMM1 complex, both involved in late steps of the major beta-barrel assembly pathway, that is responsible for biogenesis of all outer membrane beta-barrel proteins. May act as a switch that shuttles between both complexes and channels precursor proteins into the TOM40-specific pathway. Plays a role in mitochondrial morphology and in the inheritance of mitochondria. In Phaeosphaeria nodorum (strain SN15 / ATCC MYA-4574 / FGSC 10173) (Glume blotch fungus), this protein is Mitochondrial distribution and morphology protein 10.